Consider the following 249-residue polypeptide: MFKATCNSRDFKKVINATSNLVDEICFEVDETGIKASAMDPSHVALVSMGMPKEVFESYEGDIHDIGIDLEALKKIIARSKGDEKLILELDDEKNKLNVTFKSNVTRKFSIALYDVSSSNLKVPDISYPNQVSIKAGAFVEALKDAELVNDHITLKVDEDKFVIYSKGDLNQSETVFENNNDEYETLTEFKMSEPSKSTFNLAYLKDLTKSTSAEDILKIYLGSDMPVKIEYEVSGSKLVFLLAPRIES.

This sequence belongs to the PCNA family. As to quaternary structure, homotrimer. The subunits circularize to form a toroid; DNA passes through its center. Replication factor C (RFC) is required to load the toroid on the DNA.

In terms of biological role, sliding clamp subunit that acts as a moving platform for DNA processing. Responsible for tethering the catalytic subunit of DNA polymerase and other proteins to DNA during high-speed replication. This chain is DNA polymerase sliding clamp, found in Methanococcus vannielii (strain ATCC 35089 / DSM 1224 / JCM 13029 / OCM 148 / SB).